A 629-amino-acid polypeptide reads, in one-letter code: Pentatricopeptide repeat-containing protein At1g63150 (629 aa).

PPR repeat units lie at residues 46–81 (ASGD…RPFP), 82–116 (SIVE…GISH), 117–151 (DLYT…GYEP), 152–186 (DIVT…GYKP), 187–221 (DTFT…GCQP), 222–256 (DLVT…RIKA), 257–291 (NVVI…GIRP), 292–326 (NVVT…KINP), 327–361 (NVVT…SIDP), 362–396 (DTIT…DCLP), 397–431 (NIQT…GLVG), 432–466 (NTVT…RVPT), 467–501 (DIMT…EMEL), 502–532 (NIFI…LSIK), 534–568 (DVVT…GTLP), and 569–603 (NSGT…GFVG).

This sequence belongs to the PPR family. P subfamily.

This is Pentatricopeptide repeat-containing protein At1g63150 from Arabidopsis thaliana (Mouse-ear cress).